A 192-amino-acid polypeptide reads, in one-letter code: dTTP/UTP pyrophosphatase (192 aa).

The Proton acceptor role is filled by aspartate 70.

Belongs to the Maf family. YhdE subfamily. A divalent metal cation serves as cofactor.

The protein resides in the cytoplasm. It catalyses the reaction dTTP + H2O = dTMP + diphosphate + H(+). It carries out the reaction UTP + H2O = UMP + diphosphate + H(+). Functionally, nucleoside triphosphate pyrophosphatase that hydrolyzes dTTP and UTP. May have a dual role in cell division arrest and in preventing the incorporation of modified nucleotides into cellular nucleic acids. The chain is dTTP/UTP pyrophosphatase from Alkaliphilus oremlandii (strain OhILAs) (Clostridium oremlandii (strain OhILAs)).